Reading from the N-terminus, the 557-residue chain is Formate--tetrahydrofolate ligase (557 aa).

66 to 73 (TPAGEGKS) contributes to the ATP binding site.

Belongs to the formate--tetrahydrofolate ligase family.

The catalysed reaction is (6S)-5,6,7,8-tetrahydrofolate + formate + ATP = (6R)-10-formyltetrahydrofolate + ADP + phosphate. Its pathway is one-carbon metabolism; tetrahydrofolate interconversion. The chain is Formate--tetrahydrofolate ligase from Clostridium botulinum (strain Loch Maree / Type A3).